We begin with the raw amino-acid sequence, 489 residues long: Probable cytosol aminopeptidase (489 aa).

Mn(2+) is bound by residues K254 and D259. K266 is a catalytic residue. Mn(2+) is bound by residues D277, D336, and E338. The active site involves R340.

The protein belongs to the peptidase M17 family. Requires Mn(2+) as cofactor.

It is found in the cytoplasm. The catalysed reaction is Release of an N-terminal amino acid, Xaa-|-Yaa-, in which Xaa is preferably Leu, but may be other amino acids including Pro although not Arg or Lys, and Yaa may be Pro. Amino acid amides and methyl esters are also readily hydrolyzed, but rates on arylamides are exceedingly low.. It catalyses the reaction Release of an N-terminal amino acid, preferentially leucine, but not glutamic or aspartic acids.. Its function is as follows. Presumably involved in the processing and regular turnover of intracellular proteins. Catalyzes the removal of unsubstituted N-terminal amino acids from various peptides. The sequence is that of Probable cytosol aminopeptidase from Cereibacter sphaeroides (strain ATCC 17025 / ATH 2.4.3) (Rhodobacter sphaeroides).